Here is a 497-residue protein sequence, read N- to C-terminus: Ammonium transporter Rh type C (497 aa).

Over 1–9 (MAWNTNLRG) the chain is Cytoplasmic. A helical membrane pass occupies residues 10–30 (RLPITCLILQVTMVVLFGVFV). Residues 31–61 (RYDIQADAHWWLEKKRKNISSDVENEFYYRY) are Extracellular-facing. The N-linked (GlcNAc...) asparagine glycan is linked to asparagine 48. A helical membrane pass occupies residues 62-82 (PSFEDVHAMVFVGFGFLMTYL). Over 83 to 93 (QRYGFSAVGFN) the chain is Cytoplasmic. The helical transmembrane segment at 94–114 (FLLAAFGIQWALLMQGWFHFF) threads the bilayer. At 115–125 (EEGHILLSVEN) the chain is on the extracellular side. Residues 126 to 145 (LIQADFCVASTCVAFGAVLG) form a helical membrane-spanning segment. Over 146 to 151 (KISPMQ) the chain is Cytoplasmic. Residues 152 to 174 (LLIMTFFQVTLFTVNEFILLNLI) traverse the membrane as a helical segment. At 175 to 179 (EAKDA) the chain is on the extracellular side. Residues 180-200 (GGSMTIHTFGAYFGLTVTWIL) form a helical membrane-spanning segment. Residues 201-219 (YRKNLEQSKQRQSSVYHSD) lie on the Cytoplasmic side of the membrane. A helical membrane pass occupies residues 220 to 240 (LFAMIGTLFLWIYWPSFNSAS). Over 241 to 251 (SFHGDTQHRAA) the chain is Extracellular. The chain crosses the membrane as a helical span at residues 252–272 (LNTYLSLAASVLTTVAVSSVI). The Cytoplasmic portion of the chain corresponds to 273 to 282 (HKKGKLDMVH). The helical transmembrane segment at 283-303 (IQNATLAGGVGVGTAAEMMLT) threads the bilayer. Proline 304 is a topological domain (extracellular). Residues 305–325 (YGALIVGFFCGILSTLGFAYL) traverse the membrane as a helical segment. Residues 326-340 (SPFLESRLRIQDTCG) are Cytoplasmic-facing. The chain crosses the membrane as a helical span at residues 341–361 (IHNLHGIPGIIGGIVGAVTAA). Topologically, residues 362 to 395 (YSSPDVYGEPGIVHSFGFGGYKADWTKRMQGRSQ) are extracellular. The chain crosses the membrane as a helical span at residues 396-416 (IFGLLLSLAMALVGGIIVGFI). Topologically, residues 417 to 497 (LKLPFWGQAS…ATVTSSSLVH (81 aa)) are cytoplasmic.

It belongs to the ammonium transporter (TC 2.A.49) family. Rh subfamily. In terms of assembly, homotrimer. In terms of processing, N-glycosylated. Expressed by connecting tubule cells and intercalated cells of the collecting duct in kidney (at protein level).

Its subcellular location is the cell membrane. The protein localises to the apical cell membrane. The enzyme catalyses NH4(+)(in) = NH4(+)(out). It catalyses the reaction methylamine(out) = methylamine(in). The catalysed reaction is CO2(out) = CO2(in). Its function is as follows. Ammonium transporter involved in the maintenance of acid-base homeostasis. Transports ammonium and its related derivative methylammonium across the plasma membrane of epithelial cells likely contributing to renal transepithelial ammonia transport and ammonia metabolism. Postulated to primarily mediate an electroneutral bidirectional transport of NH3 ammonia species according to a mechanism that implies interaction of an NH4(+) ion with acidic residues of the pore entry followed by dissociation of NH4(+) into NH3 and H(+). As a result NH3 transits through the central pore and is protonated on the extracellular side reforming NH4(+). May act as a CO2 channel providing for renal acid secretion. The polypeptide is Ammonium transporter Rh type C (Rhcg) (Rattus norvegicus (Rat)).